Consider the following 291-residue polypeptide: MDFKWLHTFVTAAKYENFRKTAETLFLSQPTVTVHIKQLEKEISCKLFERKGRQIQLTDEGRAYLPYALRLLDDYENSMAELHRVRQGYSQTLQLAVSPLIADTVLPSVMKRYTAMNTETEMAVTIFESAEIASLIKAGEADIGLSCLKVQSSSLSCHCLYKDPVVLVAPPDKRFIEDNEIDAKEVLEQYLLLTHNHPDYWDDLLRQVRMTFPFVRTMKVTQTHITKRFIKEGLGVSFLPLSTVKRELAEKQMIRIPYQSVQLPYAGAYAIALYENKKEKKFLDFLSHFHF.

The HTH lysR-type domain maps to 1 to 58; it reads MDFKWLHTFVTAAKYENFRKTAETLFLSQPTVTVHIKQLEKEISCKLFERKGRQIQLT. Residues 18–37 constitute a DNA-binding region (H-T-H motif); the sequence is FRKTAETLFLSQPTVTVHIK.

The protein belongs to the LysR transcriptional regulatory family.

The protein resides in the cytoplasm. Functionally, negative regulatory protein for the citA gene for citrate synthase I. This chain is HTH-type transcriptional regulator CitR (citR), found in Bacillus subtilis (strain 168).